A 219-amino-acid polypeptide reads, in one-letter code: Oligoribonuclease (219 aa).

The Exonuclease domain maps to 30 to 193 (LVWLDMEMTG…ADIVESIEEL (164 aa)). Residue Tyr151 is part of the active site.

Belongs to the oligoribonuclease family.

It is found in the cytoplasm. Functionally, 3'-to-5' exoribonuclease specific for small oligoribonucleotides. The protein is Oligoribonuclease of Ralstonia nicotianae (strain ATCC BAA-1114 / GMI1000) (Ralstonia solanacearum).